The following is a 91-amino-acid chain: Acylphosphatase (91 aa).

In terms of domain architecture, Acylphosphatase-like spans 3–90; the sequence is RVLIRVKGKV…EIYLDFSITQ (88 aa). Active-site residues include Arg-18 and Asn-36.

The protein belongs to the acylphosphatase family.

The catalysed reaction is an acyl phosphate + H2O = a carboxylate + phosphate + H(+). The sequence is that of Acylphosphatase (acyP) from Shewanella amazonensis (strain ATCC BAA-1098 / SB2B).